A 173-amino-acid polypeptide reads, in one-letter code: ATP-dependent protease subunit HslV (173 aa).

Threonine 2 is a catalytic residue. 3 residues coordinate Na(+): glycine 158, aspartate 161, and serine 164.

It belongs to the peptidase T1B family. HslV subfamily. As to quaternary structure, a double ring-shaped homohexamer of HslV is capped on each side by a ring-shaped HslU homohexamer. The assembly of the HslU/HslV complex is dependent on binding of ATP.

It localises to the cytoplasm. It catalyses the reaction ATP-dependent cleavage of peptide bonds with broad specificity.. Its activity is regulated as follows. Allosterically activated by HslU binding. In terms of biological role, protease subunit of a proteasome-like degradation complex believed to be a general protein degrading machinery. The sequence is that of ATP-dependent protease subunit HslV from Actinobacillus pleuropneumoniae serotype 5b (strain L20).